The sequence spans 418 residues: Histidinol dehydrogenase (418 aa).

Residues Tyr-119, Gln-180, and Asn-203 each contribute to the NAD(+) site. The substrate site is built by Thr-226, Gln-248, and His-251. Residues Gln-248 and His-251 each contribute to the Zn(2+) site. Active-site proton acceptor residues include Glu-316 and His-317. Substrate-binding residues include His-317, Asp-350, Glu-404, and His-409. A Zn(2+)-binding site is contributed by Asp-350. His-409 is a Zn(2+) binding site.

Belongs to the histidinol dehydrogenase family. It depends on Zn(2+) as a cofactor.

It carries out the reaction L-histidinol + 2 NAD(+) + H2O = L-histidine + 2 NADH + 3 H(+). It participates in amino-acid biosynthesis; L-histidine biosynthesis; L-histidine from 5-phospho-alpha-D-ribose 1-diphosphate: step 9/9. Catalyzes the sequential NAD-dependent oxidations of L-histidinol to L-histidinaldehyde and then to L-histidine. This chain is Histidinol dehydrogenase, found in Staphylococcus aureus (strain MRSA252).